Here is a 535-residue protein sequence, read N- to C-terminus: Ribonuclease Y (535 aa).

The helical transmembrane segment at 4 to 24 (IILAMVCALIGLIIGYVAISM) threads the bilayer. A disordered region spans residues 107–145 (TDRASSLDRKDENLSNKEKMLDSKEQSLTDKSRHINERE). In terms of domain architecture, KH spans 225-285 (TITTVHLPDD…IRREIARMTL (61 aa)). The region spanning 351 to 444 (VLRHSVEVGK…VAAADALSSA (94 aa)) is the HD domain.

The protein belongs to the RNase Y family.

The protein localises to the cell membrane. Functionally, endoribonuclease that initiates mRNA decay. The polypeptide is Ribonuclease Y (Streptococcus agalactiae serotype Ia (strain ATCC 27591 / A909 / CDC SS700)).